A 476-amino-acid chain; its full sequence is Probable G-protein coupled receptor No9 (476 aa).

The Extracellular portion of the chain corresponds to 1–36 (MEGPPLSPAPADNVTLNVSCGRPATLFDWADHRLIS). N-linked (GlcNAc...) asparagine glycans are attached at residues N13 and N17. Residues 37–60 (LLALAFLNLMVVAGNLLVVMAVFV) traverse the membrane as a helical segment. At 61–69 (HSKLRTVTN) the chain is on the cytoplasmic side. Residues 70-93 (LFIVSLACADLLVGMLVLPFSATL) traverse the membrane as a helical segment. Over 94–103 (EVLDVWLYGD) the chain is Extracellular. The helical transmembrane segment at 104–127 (VWCSVWLAVDVWMCTSSILNLCAI) threads the bilayer. C106 and C192 are disulfide-bonded. Residues 128 to 152 (SLDRYLAVSQPISYPSLMSTRRAKQ) lie on the Cytoplasmic side of the membrane. A helical membrane pass occupies residues 153-172 (LIAAVWVLSFVICFPPLVGW). The Extracellular portion of the chain corresponds to 173–200 (NDRPGTLIGSRGSSACRLTCELTNERGY). The helical transmembrane segment at 201–221 (VIYSALGSFFLPSTVMLFFYG) threads the bilayer. Residues 222–375 (RIYRTAVSTT…FRMETKAAKT (154 aa)) are Cytoplasmic-facing. Residues 266–278 (AAAGGARAHGQVR) are compositionally biased toward low complexity. Disordered regions lie at residues 266 to 293 (AAAG…NKPS) and 317 to 351 (DSRP…PRFI). The chain crosses the membrane as a helical span at residues 376–396 (VGIIVGLFILCWLPFFVCYLV). The Extracellular portion of the chain corresponds to 397-406 (RGFCADCVPP). Residues 407–430 (LLFSVFFWLGYCNSAVNPCVYALC) form a helical membrane-spanning segment. The Cytoplasmic portion of the chain corresponds to 431 to 476 (SRDFRFAFSSILCKCVCRRGAMERRFRRTLLVGNRSQTEEDCEVAD).

It belongs to the G-protein coupled receptor 1 family.

The protein localises to the cell membrane. Its function is as follows. Orphan G-protein coupled receptor. This Amphibalanus amphitrite (Striped barnacle) protein is Probable G-protein coupled receptor No9.